The chain runs to 150 residues: uncharacterized protein (150 aa).

This sequence belongs to the Dps family.

This is an uncharacterized protein from Kitasatospora aureofaciens (Streptomyces aureofaciens).